We begin with the raw amino-acid sequence, 407 residues long: Tryptophan synthase beta chain (407 aa).

Lysine 91 bears the N6-(pyridoxal phosphate)lysine mark.

Belongs to the TrpB family. In terms of assembly, tetramer of two alpha and two beta chains. Pyridoxal 5'-phosphate is required as a cofactor.

The catalysed reaction is (1S,2R)-1-C-(indol-3-yl)glycerol 3-phosphate + L-serine = D-glyceraldehyde 3-phosphate + L-tryptophan + H2O. The protein operates within amino-acid biosynthesis; L-tryptophan biosynthesis; L-tryptophan from chorismate: step 5/5. The beta subunit is responsible for the synthesis of L-tryptophan from indole and L-serine. This is Tryptophan synthase beta chain from Streptococcus pneumoniae (strain P1031).